The chain runs to 312 residues: Oxidoreductase NAD-binding domain-containing protein 1 (312 aa).

A signal peptide spans 1–17 (MACAAVMIPGLLRCSVG). The 137-residue stretch at 50 to 186 (HMERTASVLR…GGVGINPLLS (137 aa)) folds into the FAD-binding FR-type domain. 178–183 (GVGINP) serves as a coordination point for NAD(+).

The sequence is that of Oxidoreductase NAD-binding domain-containing protein 1 (OXNAD1) from Homo sapiens (Human).